Consider the following 174-residue polypeptide: Gamma-crystallin C (174 aa).

Beta/gamma crystallin 'Greek key' domains are found at residues 2–40 (GKIT…RVDS) and 41–83 (GCWM…RLIP). S-methylcysteine is present on cysteine 23. Positions 84-87 (HAGS) are connecting peptide. Beta/gamma crystallin 'Greek key' domains are found at residues 88–128 (HRMR…QVLE) and 129–171 (GCWV…RRVV).

It belongs to the beta/gamma-crystallin family.

Crystallins are the dominant structural components of the vertebrate eye lens. This Mus musculus (Mouse) protein is Gamma-crystallin C (Crygc).